Consider the following 85-residue polypeptide: MAHKKGVGSSRNGRDSNPKYLGVKLFGGQAIEAGNIIIRQRGTQFHAGDGVGLGRDHTLFALVNGTVEFSIKGPKKRRTVNVIPA.

It belongs to the bacterial ribosomal protein bL27 family.

The chain is Large ribosomal subunit protein bL27 from Xylella fastidiosa (strain Temecula1 / ATCC 700964).